The sequence spans 699 residues: Transketolase (699 aa).

Substrate is bound at residue histidine 45. Residues threonine 48, histidine 85, and 133–135 (GPL) contribute to the thiamine diphosphate site. Residue aspartate 177 participates in Mg(2+) binding. The thiamine diphosphate site is built by glycine 178 and asparagine 207. Mg(2+) contacts are provided by asparagine 207 and isoleucine 209. 3 residues coordinate substrate: histidine 283, arginine 378, and serine 405. Histidine 283 contributes to the thiamine diphosphate binding site. Glutamate 441 functions as the Proton donor in the catalytic mechanism. Phenylalanine 467 provides a ligand contact to thiamine diphosphate. Histidine 491, aspartate 499, and arginine 552 together coordinate substrate.

Belongs to the transketolase family. In terms of assembly, homodimer. Mg(2+) serves as cofactor. It depends on Ca(2+) as a cofactor. Requires Mn(2+) as cofactor. Co(2+) is required as a cofactor. The cofactor is thiamine diphosphate.

It catalyses the reaction D-sedoheptulose 7-phosphate + D-glyceraldehyde 3-phosphate = aldehydo-D-ribose 5-phosphate + D-xylulose 5-phosphate. Its function is as follows. Catalyzes the transfer of a two-carbon ketol group from a ketose donor to an aldose acceptor, via a covalent intermediate with the cofactor thiamine pyrophosphate. This is Transketolase (tkt) from Mycobacterium leprae (strain TN).